The chain runs to 151 residues: Transcriptional regulator SyrB (151 aa).

Residues 1–61 (MADESNTGPV…RYSEQERNDK (61 aa)) are disordered. Residues 33–48 (PQKAAAEPAQPKAPAA) are compositionally biased toward low complexity. A compositionally biased stretch (basic and acidic residues) spans 52-61 (RYSEQERNDK).

It belongs to the SyrB family.

Responsible for the repression of SyrM activity. The chain is Transcriptional regulator SyrB (syrB) from Rhizobium meliloti (strain 1021) (Ensifer meliloti).